The primary structure comprises 418 residues: UDP-N-acetylglucosamine 1-carboxyvinyltransferase (418 aa).

Residue 22–23 (KN) participates in phosphoenolpyruvate binding. A UDP-N-acetyl-alpha-D-glucosamine-binding site is contributed by arginine 93. Cysteine 117 (proton donor) is an active-site residue. At cysteine 117 the chain carries 2-(S-cysteinyl)pyruvic acid O-phosphothioketal. Aspartate 305 and valine 327 together coordinate UDP-N-acetyl-alpha-D-glucosamine.

Belongs to the EPSP synthase family. MurA subfamily.

It localises to the cytoplasm. It catalyses the reaction phosphoenolpyruvate + UDP-N-acetyl-alpha-D-glucosamine = UDP-N-acetyl-3-O-(1-carboxyvinyl)-alpha-D-glucosamine + phosphate. The protein operates within cell wall biogenesis; peptidoglycan biosynthesis. Cell wall formation. Adds enolpyruvyl to UDP-N-acetylglucosamine. The protein is UDP-N-acetylglucosamine 1-carboxyvinyltransferase of Halorhodospira halophila (strain DSM 244 / SL1) (Ectothiorhodospira halophila (strain DSM 244 / SL1)).